Reading from the N-terminus, the 414-residue chain is Sensor protein CutS (414 aa).

The span at 1–15 shows a compositional bias: pro residues; the sequence is MATTPAPPGAPPKPT. The segment at 1-21 is disordered; the sequence is MATTPAPPGAPPKPTWDPRSA. 2 helical membrane passes run 37–57 and 121–141; these read LLYG…IYLL and SLLA…AMAG. Residues 142–194 enclose the HAMP domain; the sequence is RVLSPLGRITRTARAVAGSDLSRRIELDGPDDELKELADTFDDMLERLQRAFT. In terms of domain architecture, Histidine kinase spans 202 to 414; sequence NASHELRTPL…GLVMRVTLPV (213 aa). His-205 carries the post-translational modification Phosphohistidine; by autocatalysis.

It localises to the cell membrane. It carries out the reaction ATP + protein L-histidine = ADP + protein N-phospho-L-histidine.. In terms of biological role, member of the two-component regulatory system CutS/CutR, involved in the regulation of copper metabolism. This chain is Sensor protein CutS (cutS), found in Streptomyces coelicolor (strain ATCC BAA-471 / A3(2) / M145).